Reading from the N-terminus, the 146-residue chain is 3-dehydroquinate dehydratase (146 aa).

The Proton acceptor role is filled by tyrosine 22. Substrate-binding residues include asparagine 73, histidine 79, and aspartate 86. Histidine 101 (proton donor) is an active-site residue. Residues 102-103 (IS) and arginine 112 contribute to the substrate site.

The protein belongs to the type-II 3-dehydroquinase family. Homododecamer.

The enzyme catalyses 3-dehydroquinate = 3-dehydroshikimate + H2O. It functions in the pathway metabolic intermediate biosynthesis; chorismate biosynthesis; chorismate from D-erythrose 4-phosphate and phosphoenolpyruvate: step 3/7. Catalyzes a trans-dehydration via an enolate intermediate. The sequence is that of 3-dehydroquinate dehydratase (aroQ) from Corynebacterium pseudotuberculosis (strain C231).